Here is an 861-residue protein sequence, read N- to C-terminus: Leucine--tRNA ligase (861 aa).

The 'HIGH' region signature appears at 42-52; the sequence is PYPSGRLHMGH. Positions 619 to 623 match the 'KMSKS' region motif; it reads KMSKS. Lys-622 provides a ligand contact to ATP.

This sequence belongs to the class-I aminoacyl-tRNA synthetase family.

It is found in the cytoplasm. The enzyme catalyses tRNA(Leu) + L-leucine + ATP = L-leucyl-tRNA(Leu) + AMP + diphosphate. The sequence is that of Leucine--tRNA ligase from Haemophilus influenzae (strain 86-028NP).